The primary structure comprises 142 residues: HTH-type transcriptional regulator MntR (142 aa).

The region spanning 1 to 63 (MPTPSMEDYI…YEKYRGLVLT (63 aa)) is the HTH dtxR-type domain. Mn(2+) is bound by residues Asp8, Glu11, His77, Glu99, Glu102, and His103.

Belongs to the DtxR/MntR family. As to quaternary structure, homodimer.

The protein localises to the cytoplasm. DNA binding is strongly activated by Mn(2+). In terms of biological role, central regulator of manganese homeostasis. This Bacillus cytotoxicus (strain DSM 22905 / CIP 110041 / 391-98 / NVH 391-98) protein is HTH-type transcriptional regulator MntR.